The following is a 271-amino-acid chain: Methylcorrinoid:tetrahydrofolate methyltransferase (271 aa).

A Pterin-binding domain is found at 1–247 (MIIIGEKLNG…GAIFATDALL (247 aa)).

The protein belongs to the vitamin-B12 dependent methionine synthase family. The proline betaine:THF methyl transfer system is composed of two methyltransferases, MtpB and MtqA, and the corrinoid protein MtqC. The L-carnitine:THF methyl transfer system is composed of two methyltransferases, MtcB and MtqA, and the corrinoid protein MtqC.

The enzyme catalyses methyl-Co(III)-[quaternary-amine-specific corrinoid protein] + (6S)-5,6,7,8-tetrahydrofolate = Co(I)-[quaternary-amine-specific corrinoid protein] + (6S)-5-methyl-5,6,7,8-tetrahydrofolate + H(+). In terms of biological role, involved in the degradation of the quaternary amines L-proline betaine and L-carnitine. Component of a corrinoid-dependent methyltransferase system that transfers a methyl group from L-proline betaine or L-carnitine to tetrahydrofolate (THF), forming methyl-THF, a key intermediate in the Wood-Ljungdahl acetogenesis pathway. MtqA catalyzes the transfer of a methyl group from the methylated corrinoid protein MtqC to THF, forming methyl-THF. The sequence is that of Methylcorrinoid:tetrahydrofolate methyltransferase from Eubacterium limosum.